The following is a 514-amino-acid chain: Membrane-bound lytic murein transglycosylase F (514 aa).

Residues 1–30 form the signal peptide; it reads MKKLKINYLFIGILTLLLAAALWPSIPWFG. Positions 31-269 are non-LT domain; that stretch reads KTENHIAAIQ…RIEEKYLGHG (239 aa). The interval 270 to 514 is LT domain; it reads DDFDYVDTRS…LFTPQKKEEK (245 aa). Glu314 is a catalytic residue.

The protein in the N-terminal section; belongs to the bacterial solute-binding protein 3 family. This sequence in the C-terminal section; belongs to the transglycosylase Slt family.

The protein resides in the cell outer membrane. It catalyses the reaction Exolytic cleavage of the (1-&gt;4)-beta-glycosidic linkage between N-acetylmuramic acid (MurNAc) and N-acetylglucosamine (GlcNAc) residues in peptidoglycan, from either the reducing or the non-reducing ends of the peptidoglycan chains, with concomitant formation of a 1,6-anhydrobond in the MurNAc residue.. In terms of biological role, murein-degrading enzyme that degrades murein glycan strands and insoluble, high-molecular weight murein sacculi, with the concomitant formation of a 1,6-anhydromuramoyl product. Lytic transglycosylases (LTs) play an integral role in the metabolism of the peptidoglycan (PG) sacculus. Their lytic action creates space within the PG sacculus to allow for its expansion as well as for the insertion of various structures such as secretion systems and flagella. This chain is Membrane-bound lytic murein transglycosylase F, found in Salmonella paratyphi A (strain ATCC 9150 / SARB42).